A 507-amino-acid chain; its full sequence is Maturase K (507 aa).

The protein belongs to the intron maturase 2 family. MatK subfamily.

The protein resides in the plastid. Its subcellular location is the chloroplast. Usually encoded in the trnK tRNA gene intron. Probably assists in splicing its own and other chloroplast group II introns. The polypeptide is Maturase K (Magnolia figo (Banana shrub)).